We begin with the raw amino-acid sequence, 293 residues long: MTSQKATLIGLVAIVLWSTMVGLIRGVSEGLGPVGGAAMIYSLSGLLLIFTVGLPDIRRFPGRYLIAGSVLFVSYEICLALSLGYAATRHQAIEVGMVNYLWPSLTILFAILFNGQKTNWLIVPGLLIALTGVCWVLGGENGLNPGEIISNVATSPLSYLLAFLGAFIWATYCTVTNKYARGFNGITVFVLLTAVALWLHYFLTPQPAMIFSLPVIAKLFTAALTLGFAYAAWNVGILHGNVTIMAVGSYFTPVMSSALAALLLSSPLSFSFWQGAVMVCVGSLLCWLATRRR.

The Cytoplasmic portion of the chain corresponds to 1–6 (MTSQKA). Residues 7-27 (TLIGLVAIVLWSTMVGLIRGV) traverse the membrane as a helical segment. The 123-residue stretch at 15–137 (VLWSTMVGLI…IALTGVCWVL (123 aa)) folds into the EamA 1 domain. The Periplasmic portion of the chain corresponds to 28–33 (SEGLGP). A helical transmembrane segment spans residues 34–54 (VGGAAMIYSLSGLLLIFTVGL). Residues 55-63 (PDIRRFPGR) are Cytoplasmic-facing. The chain crosses the membrane as a helical span at residues 64 to 84 (YLIAGSVLFVSYEICLALSLG). The Periplasmic portion of the chain corresponds to 85–92 (YAATRHQA). A helical transmembrane segment spans residues 93–113 (IEVGMVNYLWPSLTILFAILF). The Cytoplasmic segment spans residues 114–119 (NGQKTN). The helical transmembrane segment at 120–140 (WLIVPGLLIALTGVCWVLGGE) threads the bilayer. Topologically, residues 141-147 (NGLNPGE) are periplasmic. Residues 148–168 (IISNVATSPLSYLLAFLGAFI) traverse the membrane as a helical segment. The 119-residue stretch at 167-285 (FIWATYCTVT…AVMVCVGSLL (119 aa)) folds into the EamA 2 domain. The Cytoplasmic portion of the chain corresponds to 169 to 182 (WATYCTVTNKYARG). A helical transmembrane segment spans residues 183-203 (FNGITVFVLLTAVALWLHYFL). Over 204–207 (TPQP) the chain is Periplasmic. The helical transmembrane segment at 208–228 (AMIFSLPVIAKLFTAALTLGF) threads the bilayer. Over 229–243 (AYAAWNVGILHGNVT) the chain is Cytoplasmic. A helical transmembrane segment spans residues 244 to 264 (IMAVGSYFTPVMSSALAALLL). Over 265 to 267 (SSP) the chain is Periplasmic. The helical transmembrane segment at 268 to 288 (LSFSFWQGAVMVCVGSLLCWL) threads the bilayer. Over 289–293 (ATRRR) the chain is Cytoplasmic.

This sequence belongs to the drug/metabolite transporter (DMT) superfamily. Aromatic amino acid/paraquat exporter (ArAA/P-E) (TC 2.A.7.17) family.

It is found in the cell inner membrane. Its function is as follows. Amino acid transporter with broad substrate specificity. Required for resistance to methyl viologen. May function with OmpD porin. This is Aromatic amino acid exporter YddG (yddG) from Salmonella typhimurium (strain 14028s / SGSC 2262).